Here is a 117-residue protein sequence, read N- to C-terminus: Large ribosomal subunit protein bL20 (117 aa).

It belongs to the bacterial ribosomal protein bL20 family.

Functionally, binds directly to 23S ribosomal RNA and is necessary for the in vitro assembly process of the 50S ribosomal subunit. It is not involved in the protein synthesizing functions of that subunit. This chain is Large ribosomal subunit protein bL20, found in Rickettsia peacockii (strain Rustic).